A 571-amino-acid polypeptide reads, in one-letter code: Proline--tRNA ligase (571 aa).

Belongs to the class-II aminoacyl-tRNA synthetase family. ProS type 1 subfamily. As to quaternary structure, homodimer.

The protein resides in the cytoplasm. The enzyme catalyses tRNA(Pro) + L-proline + ATP = L-prolyl-tRNA(Pro) + AMP + diphosphate. Its function is as follows. Catalyzes the attachment of proline to tRNA(Pro) in a two-step reaction: proline is first activated by ATP to form Pro-AMP and then transferred to the acceptor end of tRNA(Pro). As ProRS can inadvertently accommodate and process non-cognate amino acids such as alanine and cysteine, to avoid such errors it has two additional distinct editing activities against alanine. One activity is designated as 'pretransfer' editing and involves the tRNA(Pro)-independent hydrolysis of activated Ala-AMP. The other activity is designated 'posttransfer' editing and involves deacylation of mischarged Ala-tRNA(Pro). The misacylated Cys-tRNA(Pro) is not edited by ProRS. This chain is Proline--tRNA ligase, found in Actinobacillus succinogenes (strain ATCC 55618 / DSM 22257 / CCUG 43843 / 130Z).